Reading from the N-terminus, the 950-residue chain is Bifunctional glutamine synthetase adenylyltransferase/adenylyl-removing enzyme (950 aa).

The segment at 1–443 (MSLPSPLLPV…VFVTLIGDEE (443 aa)) is adenylyl removase. The tract at residues 450–950 (ERHFNELWDM…WQEWLESSTI (501 aa)) is adenylyl transferase.

The protein belongs to the GlnE family. Mg(2+) serves as cofactor.

The enzyme catalyses [glutamine synthetase]-O(4)-(5'-adenylyl)-L-tyrosine + phosphate = [glutamine synthetase]-L-tyrosine + ADP. It carries out the reaction [glutamine synthetase]-L-tyrosine + ATP = [glutamine synthetase]-O(4)-(5'-adenylyl)-L-tyrosine + diphosphate. In terms of biological role, involved in the regulation of glutamine synthetase GlnA, a key enzyme in the process to assimilate ammonia. When cellular nitrogen levels are high, the C-terminal adenylyl transferase (AT) inactivates GlnA by covalent transfer of an adenylyl group from ATP to specific tyrosine residue of GlnA, thus reducing its activity. Conversely, when nitrogen levels are low, the N-terminal adenylyl removase (AR) activates GlnA by removing the adenylyl group by phosphorolysis, increasing its activity. The regulatory region of GlnE binds the signal transduction protein PII (GlnB) which indicates the nitrogen status of the cell. This Vibrio vulnificus (strain YJ016) protein is Bifunctional glutamine synthetase adenylyltransferase/adenylyl-removing enzyme.